The primary structure comprises 626 residues: Chaperone protein HtpG (626 aa).

Residues 1-341 (MIKKEFKAES…SEDLSLNISR (341 aa)) form an a; substrate-binding region. A b region spans residues 342–552 (EMLQHDRQLK…DGDVTIEMEK (211 aa)). The interval 553–626 (ILSAMPNNQE…FTNDICKLMS (74 aa)) is c.

Belongs to the heat shock protein 90 family. As to quaternary structure, homodimer.

It localises to the cytoplasm. Its function is as follows. Molecular chaperone. Has ATPase activity. The sequence is that of Chaperone protein HtpG from Alkaliphilus metalliredigens (strain QYMF).